A 131-amino-acid chain; its full sequence is Putative superoxide reductase (131 aa).

E15, H17, H45, H51, C115, and H118 together coordinate Fe cation.

The protein belongs to the desulfoferrodoxin family. Fe cation is required as a cofactor.

It catalyses the reaction reduced [rubredoxin] + superoxide + 2 H(+) = oxidized [rubredoxin] + H2O2. Uses electrons from reduced NADP, by way of rubredoxin and an oxidoreductase, to catalyze the reduction of superoxide to hydrogen peroxide. This Thermotoga maritima (strain ATCC 43589 / DSM 3109 / JCM 10099 / NBRC 100826 / MSB8) protein is Putative superoxide reductase.